We begin with the raw amino-acid sequence, 725 residues long: Catalase-peroxidase (725 aa).

The tryptophyl-tyrosyl-methioninium (Trp-Tyr) (with M-252) cross-link spans 98–226 (WHMAGSYRTS…LAAVQMGLIY (129 aa)). The active-site Proton acceptor is the H99. The segment at residues 226 to 252 (YVNPEGVNGKSDPQATAYQMRETFARM) is a cross-link (tryptophyl-tyrosyl-methioninium (Tyr-Met) (with W-98)). A heme b-binding site is contributed by H267.

This sequence belongs to the peroxidase family. Peroxidase/catalase subfamily. In terms of assembly, homodimer or homotetramer. The cofactor is heme b. Formation of the three residue Trp-Tyr-Met cross-link is important for the catalase, but not the peroxidase activity of the enzyme.

The enzyme catalyses H2O2 + AH2 = A + 2 H2O. The catalysed reaction is 2 H2O2 = O2 + 2 H2O. Bifunctional enzyme with both catalase and broad-spectrum peroxidase activity. This is Catalase-peroxidase from Paracoccus denitrificans (strain Pd 1222).